We begin with the raw amino-acid sequence, 563 residues long: Tripeptidyl-peptidase 1 (563 aa).

A signal peptide spans 1–19 (MGLQARFLGLLALVIAGKC). The propeptide at 20–195 (THSPEPDQRW…PEPQGVGPVG (176 aa)) is removed in mature form. Cys-111 and Cys-122 are disulfide-bonded. Residues 199 to 563 (GVTPSVLRQR…PALLKTLLNP (365 aa)) form the Peptidase S53 domain. N-linked (GlcNAc...) asparagine glycans are attached at residues Asn-210 and Asn-222. Catalysis depends on charge relay system residues Glu-272 and Asp-276. N-linked (GlcNAc...) asparagine glycans are attached at residues Asn-286, Asn-313, and Asn-443. Intrachain disulfides connect Cys-365–Cys-526 and Cys-522–Cys-537. Ser-475 acts as the Charge relay system in catalysis. Positions 517 and 518 each coordinate Ca(2+). Residues Gly-539, Gly-541, and Asp-543 each coordinate Ca(2+).

As to quaternary structure, monomer. Interacts with CLN5. Interacts with CLN3. Ca(2+) serves as cofactor. Post-translationally, activated by autocatalytic proteolytical processing upon acidification. N-glycosylation is required for processing and activity.

Its subcellular location is the lysosome. The protein localises to the melanosome. It carries out the reaction Release of an N-terminal tripeptide from a polypeptide, but also has endopeptidase activity.. Functionally, lysosomal serine protease with tripeptidyl-peptidase I activity. May act as a non-specific lysosomal peptidase which generates tripeptides from the breakdown products produced by lysosomal proteinases. Requires substrates with an unsubstituted N-terminus. The chain is Tripeptidyl-peptidase 1 (Tpp1) from Rattus norvegicus (Rat).